The following is a 663-amino-acid chain: Endopolyphosphatase (663 aa).

Over 1-14 (MAVNEKDVGRKSRV) the chain is Cytoplasmic. A helical; Signal-anchor for type II membrane protein transmembrane segment spans residues 15–35 (SVVLWVFIALGTLFLCKNAFT). Residues 36-663 (FSSESIHGLK…ISTGYEDERN (628 aa)) lie on the Vacuolar side of the membrane. 2 N-linked (GlcNAc...) asparagine glycosylation sites follow: N487 and N526. The tract at residues 534–564 (SAEQNKKKKKKNGKPDKSIPRKKPDELPAGP) is disordered. Positions 546–559 (GKPDKSIPRKKPDE) are enriched in basic and acidic residues.

The protein belongs to the endopolyphosphatase PPN1 family. A divalent metal cation is required as a cofactor. In terms of processing, processing by proteases in the vacuole may be required for activation.

It localises to the vacuole membrane. The enzyme catalyses [phosphate](n+1) + n H2O = (n+1) phosphate + n H(+). Functionally, catalyzes the hydrolysis of inorganic polyphosphate (polyP) chains of many hundreds of phosphate residues into shorter lengths. The polypeptide is Endopolyphosphatase (PPN1) (Candida glabrata (strain ATCC 2001 / BCRC 20586 / JCM 3761 / NBRC 0622 / NRRL Y-65 / CBS 138) (Yeast)).